The sequence spans 51 residues: Insulin (51 aa).

Intrachain disulfides connect cysteine 8–cysteine 37, cysteine 20–cysteine 50, and cysteine 36–cysteine 41.

It belongs to the insulin family. As to quaternary structure, heterodimer of a B chain and an A chain linked by two disulfide bonds.

It localises to the secreted. Its function is as follows. Insulin decreases blood glucose concentration. It increases cell permeability to monosaccharides, amino acids and fatty acids. It accelerates glycolysis, the pentose phosphate cycle, and glycogen synthesis in liver. This chain is Insulin, found in Seriola quinqueradiata (Five-ray yellowtail).